Here is a 681-residue protein sequence, read N- to C-terminus: Sodium-dependent phosphate transporter 1 (681 aa).

6 helical membrane passes run 25 to 45, 66 to 86, 106 to 126, 162 to 182, 207 to 227, and 234 to 254; these read YLWM…SVGA, ACIL…AKVS, LMAG…VASF, IVMS…ILFF, ACTV…LLGF, and GTIL…WFFV. Phosphoserine occurs at positions 269 and 273. A disordered region spans residues 269 to 296; the sequence is SPSESPLMEKKNSLKEDHEETKLSVSDI. Residues 275 to 290 are compositionally biased toward basic and acidic residues; it reads LMEKKNSLKEDHEETK. 4 helical membrane passes run 515-535, 562-582, 604-624, and 654-674; these read VSLL…FAHG, VATP…GLWV, FSIE…GLPI, and IFMA…AIMA. Positions 554-562 are a; it reads DTGDVSSKV.

It belongs to the inorganic phosphate transporter (PiT) (TC 2.A.20) family.

Its subcellular location is the cell membrane. It carries out the reaction 2 Na(+)(out) + phosphate(out) = 2 Na(+)(in) + phosphate(in). Functionally, sodium-phosphate symporter which preferentially transports the monovalent form of phosphate with a stoichiometry of two sodium ions per phosphate ion. May play a role in extracellular matrix and cartilage calcification as well as in vascular calcification. Essential for cell proliferation but this function is independent of its phosphate transporter activity. This is Sodium-dependent phosphate transporter 1 (Slc20a1) from Felis catus (Cat).